We begin with the raw amino-acid sequence, 173 residues long: Alkyl hydroperoxide reductase AhpD (173 aa).

Catalysis depends on C131, which acts as the Proton donor. An intrachain disulfide couples C131 to C134. Residue C134 is the Cysteine sulfenic acid (-SOH) intermediate of the active site.

Belongs to the AhpD family.

The enzyme catalyses N(6)-[(R)-dihydrolipoyl]-L-lysyl-[lipoyl-carrier protein] + a hydroperoxide = N(6)-[(R)-lipoyl]-L-lysyl-[lipoyl-carrier protein] + an alcohol + H2O. In terms of biological role, antioxidant protein with alkyl hydroperoxidase activity. Required for the reduction of the AhpC active site cysteine residues and for the regeneration of the AhpC enzyme activity. In Maricaulis maris (strain MCS10) (Caulobacter maris), this protein is Alkyl hydroperoxide reductase AhpD.